The sequence spans 249 residues: MKSLKKLKELETSDVFNTLHVRTILKVIKIDKCVSLARHSLVNITVGDDGIWFHLEDGTMINGLEYKTICEKELGFQGFIGIIILDSEDTLQELRLNPFQFKRRLIHMKVDTPEEFMLCGLVFALENLPLKQSTLHKLIARLVLFPVLSPVTKILFNTCDKLVCTLRHIFFNEHASEILHKVPPMIRLYNEMKNTHIEVLELYFNTKRSHNFINLSLESRQLQDSSLQVIQLATQFAQIFYSKNEDTSS.

This sequence belongs to the herpesviridae cytoplasmic envelopment protein 1 family.

It localises to the virion. The protein resides in the virion tegument. The protein localises to the host cytoplasm. It is found in the host Golgi apparatus. Plays a critical role in cytoplasmic virus egress. Participates in the final step of tegumentation and envelope acquisition within the host cytoplasm. The protein is Cytoplasmic envelopment protein 1 (U75) of Homo sapiens (Human).